The primary structure comprises 297 residues: Glycosylphosphatidylinositol anchor biosynthesis protein 11 (297 aa).

Low complexity predominate over residues 1-18; that stretch reads MTSASPSPLRAANAASSA. The disordered stretch occupies residues 1 to 26; the sequence is MTSASPSPLRAANAASSAPVPPPAMK. Helical transmembrane passes span 44–64 and 76–96; these read SFVH…ALVA and FLAL…GSVL. The disordered stretch occupies residues 97–140; that stretch reads PSPPASPVSDGDEKEKEKEKEKEKEKEKRKLPLRAGKLPRKKNQ. A compositionally biased stretch (basic and acidic residues) spans 107-126; sequence GDEKEKEKEKEKEKEKEKRK. The span at 127-140 shows a compositional bias: basic residues; it reads LPLRAGKLPRKKNQ. Residue Asn139 is glycosylated (N-linked (GlcNAc...) asparagine). 4 helical membrane-spanning segments follow: residues 157 to 177, 187 to 207, 225 to 245, and 253 to 273; these read LILT…LFGA, VLCA…VHGV, VWGG…PIPL, and AFPI…SVVC.

The protein belongs to the PIGF family.

It localises to the endoplasmic reticulum membrane. The protein operates within glycolipid biosynthesis; glycosylphosphatidylinositol-anchor biosynthesis. Its function is as follows. Acts in the GPI biosynthetic pathway between GlcNAc-PI synthesis and GPI transfer to protein. This chain is Glycosylphosphatidylinositol anchor biosynthesis protein 11 (gpi11), found in Aspergillus fumigatus (strain ATCC MYA-4609 / CBS 101355 / FGSC A1100 / Af293) (Neosartorya fumigata).